We begin with the raw amino-acid sequence, 153 residues long: Aspartate carbamoyltransferase regulatory chain (153 aa).

Zn(2+) is bound by residues cysteine 109, cysteine 114, cysteine 138, and cysteine 141.

This sequence belongs to the PyrI family. In terms of assembly, contains catalytic and regulatory chains. Requires Zn(2+) as cofactor.

Functionally, involved in allosteric regulation of aspartate carbamoyltransferase. In Escherichia coli O7:K1 (strain IAI39 / ExPEC), this protein is Aspartate carbamoyltransferase regulatory chain.